A 456-amino-acid polypeptide reads, in one-letter code: Protein FAM124B (456 aa).

Residues 262–313 form a disordered region; it reads NGCLRGDTHPQDSSLNSVSTQRTLEPRSRRRSRSRRFKVHSLELPQPSGSWE. Residues 272–284 are compositionally biased toward polar residues; sequence QDSSLNSVSTQRT. Basic residues predominate over residues 289-300; sequence SRRRSRSRRFKV.

It belongs to the FAM124 family. Interacts with CHD7 and CHD8. As to expression, expressed strongly in lung, at slightly lower levels in heart, kidney, brain and testis, and weakly in liver (at protein level). In brain, highly expressed in cortex, hippocampus, dentate gyrus, caudate putamen and cerebellum (at protein level).

It localises to the nucleus. This is Protein FAM124B (Fam124b) from Mus musculus (Mouse).